The primary structure comprises 916 residues: Probable serine/threonine-protein kinase DDB_G0267514 (916 aa).

Disordered regions lie at residues 283-311 (SGGG…SGGS), 461-518 (NNNQ…SPLD), and 550-646 (FNNQ…EPPS). Low complexity-rich tracts occupy residues 461 to 493 (NNNQ…QQQP) and 550 to 622 (FNNQ…LINN). Positions 623–646 (HSPNQYNNQGNILKNSGSVVEPPS) are enriched in polar residues. One can recognise a Protein kinase domain in the interval 662-916 (LKISSKLGEG…EILNLLNEIP (255 aa)). ATP contacts are provided by residues 668–676 (LGEGTFGVV) and Lys689. Asp784 serves as the catalytic Proton acceptor.

It belongs to the protein kinase superfamily. TKL Ser/Thr protein kinase family.

It catalyses the reaction L-seryl-[protein] + ATP = O-phospho-L-seryl-[protein] + ADP + H(+). It carries out the reaction L-threonyl-[protein] + ATP = O-phospho-L-threonyl-[protein] + ADP + H(+). This chain is Probable serine/threonine-protein kinase DDB_G0267514, found in Dictyostelium discoideum (Social amoeba).